The sequence spans 462 residues: uncharacterized protein (462 aa).

In terms of domain architecture, TRAM spans 12–70 (MLKKNDIIQVAISDLSHEGAGVAKHDGFVFFVDNALPEEVIDMRVLKVNKNSGFGKVEA). S-adenosyl-L-methionine is bound by residues glutamine 294, tyrosine 323, glutamate 344, and aspartate 392. Residue cysteine 419 is the Nucleophile of the active site.

Belongs to the class I-like SAM-binding methyltransferase superfamily. RNA M5U methyltransferase family.

This is an uncharacterized protein from Streptococcus pyogenes serotype M18 (strain MGAS8232).